The following is a 238-amino-acid chain: Ribonuclease PH (238 aa).

Residues arginine 86 and 124 to 126 (GTR) each bind phosphate.

It belongs to the RNase PH family. Homohexameric ring arranged as a trimer of dimers.

The enzyme catalyses tRNA(n+1) + phosphate = tRNA(n) + a ribonucleoside 5'-diphosphate. Phosphorolytic 3'-5' exoribonuclease that plays an important role in tRNA 3'-end maturation. Removes nucleotide residues following the 3'-CCA terminus of tRNAs; can also add nucleotides to the ends of RNA molecules by using nucleoside diphosphates as substrates, but this may not be physiologically important. Probably plays a role in initiation of 16S rRNA degradation (leading to ribosome degradation) during starvation. This Histophilus somni (strain 129Pt) (Haemophilus somnus) protein is Ribonuclease PH.